The sequence spans 492 residues: Probable cytochrome P450 313a1 (492 aa).

Cys-438 contributes to the heme binding site.

Belongs to the cytochrome P450 family. Heme is required as a cofactor.

The protein localises to the endoplasmic reticulum membrane. It localises to the microsome membrane. May be involved in the metabolism of insect hormones and in the breakdown of synthetic insecticides. This chain is Probable cytochrome P450 313a1 (Cyp313a1), found in Drosophila melanogaster (Fruit fly).